Here is an 89-residue protein sequence, read N- to C-terminus: Large ribosomal subunit protein bL27 (89 aa).

The segment at 1 to 20 (MAHKKAGGSSRNGRDSAGQR) is disordered.

The protein belongs to the bacterial ribosomal protein bL27 family.

The protein is Large ribosomal subunit protein bL27 of Paramagnetospirillum magneticum (strain ATCC 700264 / AMB-1) (Magnetospirillum magneticum).